A 235-amino-acid chain; its full sequence is Orotidine 5'-phosphate decarboxylase (235 aa).

Substrate contacts are provided by residues D12, K34, 61 to 70 (DMKLLDIDNT), T116, R177, Q186, and R207. K63 acts as the Proton donor in catalysis.

This sequence belongs to the OMP decarboxylase family. Type 1 subfamily. In terms of assembly, homodimer.

It catalyses the reaction orotidine 5'-phosphate + H(+) = UMP + CO2. The protein operates within pyrimidine metabolism; UMP biosynthesis via de novo pathway; UMP from orotate: step 2/2. Functionally, catalyzes the decarboxylation of orotidine 5'-monophosphate (OMP) to uridine 5'-monophosphate (UMP). The polypeptide is Orotidine 5'-phosphate decarboxylase (Rhizobium leguminosarum bv. trifolii (strain WSM2304)).